Reading from the N-terminus, the 144-residue chain is Eukaryotic translation initiation factor 1A, Y-chromosomal (144 aa).

Over residues methionine 1 to glycine 15 the composition is skewed to basic residues. Residues methionine 1–leucine 26 are disordered. A compositionally biased stretch (basic and acidic residues) spans lysine 16–leucine 26. One can recognise an S1-like domain in the interval glutamate 22 to asparagine 96. Residue lysine 88 forms a Glycyl lysine isopeptide (Lys-Gly) (interchain with G-Cter in ubiquitin) linkage. A disordered region spans residues lysine 114–isoleucine 144. Over residues glycine 124–isoleucine 144 the composition is skewed to acidic residues.

This sequence belongs to the eIF-1A family. As to quaternary structure, component of the 43S pre-initiation complex (43S PIC), which is composed of the 40S ribosomal subunit, EIF1, eIF1A (EIF1AX), eIF3 complex, EIF5 and eIF2-GTP-initiator tRNA complex (eIF2 ternary complex). Interacts with EIF5; this interaction contributes to the maintenance of EIF1 within the open 43S PIC. Interacts through its C-terminal domain (CTD) with the CTD of EIF5B; from the location of the start codon by the 43S complex until the formation of the 80S complex. Ubiquitous.

It is found in the cytoplasm. Its function is as follows. Component of the 43S pre-initiation complex (43S PIC), which binds to the mRNA cap-proximal region, scans mRNA 5'-untranslated region, and locates the initiation codon. This protein enhances formation of the cap-proximal complex. Together with EIF1, facilitates scanning, start codon recognition, promotion of the assembly of 48S complex at the initiation codon (43S PIC becomes 48S PIC after the start codon is reached), and dissociation of aberrant complexes. After start codon location, together with EIF5B orients the initiator methionine-tRNA in a conformation that allows 60S ribosomal subunit joining to form the 80S initiation complex. Is released after 80S initiation complex formation, just after GTP hydrolysis by EIF5B, and before release of EIF5B. Its globular part is located in the A site of the 40S ribosomal subunit. Its interaction with EIF5 during scanning contribute to the maintenance of EIF1 within the open 43S PIC. In contrast to yeast orthologs, does not bind EIF1. The polypeptide is Eukaryotic translation initiation factor 1A, Y-chromosomal (EIF1AY) (Homo sapiens (Human)).